A 116-amino-acid polypeptide reads, in one-letter code: S-adenosylmethionine decarboxylase proenzyme (116 aa).

The active-site Schiff-base intermediate with substrate; via pyruvic acid is S63. Position 63 is a pyruvic acid (Ser); by autocatalysis (S63). H68 serves as the catalytic Proton acceptor; for processing activity. C83 functions as the Proton donor; for catalytic activity in the catalytic mechanism.

It belongs to the prokaryotic AdoMetDC family. Type 1 subfamily. Heterotetramer of two alpha and two beta chains arranged as a dimer of alpha/beta heterodimers. Pyruvate is required as a cofactor. Is synthesized initially as an inactive proenzyme. Formation of the active enzyme involves a self-maturation process in which the active site pyruvoyl group is generated from an internal serine residue via an autocatalytic post-translational modification. Two non-identical subunits are generated from the proenzyme in this reaction, and the pyruvate is formed at the N-terminus of the alpha chain, which is derived from the carboxyl end of the proenzyme. The post-translation cleavage follows an unusual pathway, termed non-hydrolytic serinolysis, in which the side chain hydroxyl group of the serine supplies its oxygen atom to form the C-terminus of the beta chain, while the remainder of the serine residue undergoes an oxidative deamination to produce ammonia and the pyruvoyl group blocking the N-terminus of the alpha chain.

The catalysed reaction is S-adenosyl-L-methionine + H(+) = S-adenosyl 3-(methylsulfanyl)propylamine + CO2. The protein operates within amine and polyamine biosynthesis; S-adenosylmethioninamine biosynthesis; S-adenosylmethioninamine from S-adenosyl-L-methionine: step 1/1. Functionally, catalyzes the decarboxylation of S-adenosylmethionine to S-adenosylmethioninamine (dcAdoMet), the propylamine donor required for the synthesis of the polyamines spermine and spermidine from the diamine putrescine. The protein is S-adenosylmethionine decarboxylase proenzyme of Clostridium botulinum (strain ATCC 19397 / Type A).